A 349-amino-acid chain; its full sequence is N-acetyl-gamma-glutamyl-phosphate reductase (349 aa).

Residue cysteine 149 is part of the active site.

The protein belongs to the NAGSA dehydrogenase family. Type 1 subfamily.

Its subcellular location is the cytoplasm. It catalyses the reaction N-acetyl-L-glutamate 5-semialdehyde + phosphate + NADP(+) = N-acetyl-L-glutamyl 5-phosphate + NADPH + H(+). The protein operates within amino-acid biosynthesis; L-arginine biosynthesis; N(2)-acetyl-L-ornithine from L-glutamate: step 3/4. Its function is as follows. Catalyzes the NADPH-dependent reduction of N-acetyl-5-glutamyl phosphate to yield N-acetyl-L-glutamate 5-semialdehyde. This is N-acetyl-gamma-glutamyl-phosphate reductase from Acinetobacter baumannii (strain ACICU).